Reading from the N-terminus, the 472-residue chain is uncharacterized protein (472 aa).

It to B.subtilis YcdC.

This is an uncharacterized protein from Bacillus subtilis (strain 168).